We begin with the raw amino-acid sequence, 406 residues long: Anthranilate 1,2-dioxygenase system ferredoxin--NAD(+) reductase component (406 aa).

5-37 provides a ligand contact to FAD; it reads PFVIVGAGHAARRTAEALRARDADAPIVMIGAE. 152–161 contacts NAD(+); it reads GGGFIGLEVA.

Belongs to the FAD-dependent oxidoreductase family. As to quaternary structure, part of a multicomponent enzyme system composed of a reductase (AndAa), a ferredoxin (AndAb) and a two-subunit oxygenase component (AndAc and AndAd). It depends on FAD as a cofactor.

It catalyses the reaction 2 reduced [2Fe-2S]-[ferredoxin] + NAD(+) + H(+) = 2 oxidized [2Fe-2S]-[ferredoxin] + NADH. The protein operates within aromatic compound metabolism; anthranilate degradation via hydroxylation; catechol from anthranilate: step 1/1. In terms of biological role, part of the multicomponent anthranilate dioxygenase, that converts anthranilate to catechol. Probably transfers electrons from ferredoxin (AndAb) to NADH. In Burkholderia cepacia (Pseudomonas cepacia), this protein is Anthranilate 1,2-dioxygenase system ferredoxin--NAD(+) reductase component.